A 952-amino-acid polypeptide reads, in one-letter code: Meiotic coiled-coil protein 3 (952 aa).

3 coiled-coil regions span residues 283–611, 684–716, and 839–942; these read QLLQ…KEHL, TKKF…EDKL, and SLEN…RERE.

The protein localises to the cytoplasm. Its function is as follows. Has a role in meiosis. The protein is Meiotic coiled-coil protein 3 (mcp3) of Schizosaccharomyces pombe (strain 972 / ATCC 24843) (Fission yeast).